Here is a 354-residue protein sequence, read N- to C-terminus: 3-isopropylmalate dehydrogenase (354 aa).

76–87 (GPRWDSAKERPE) serves as a coordination point for NAD(+). 4 residues coordinate substrate: R94, R104, R130, and D215. 3 residues coordinate Mg(2+): D215, D239, and D243. Residue 273–285 (GSAPDIAGKNKAN) participates in NAD(+) binding.

It belongs to the isocitrate and isopropylmalate dehydrogenases family. LeuB type 1 subfamily. In terms of assembly, homodimer. It depends on Mg(2+) as a cofactor. Mn(2+) is required as a cofactor.

The protein resides in the cytoplasm. It carries out the reaction (2R,3S)-3-isopropylmalate + NAD(+) = 4-methyl-2-oxopentanoate + CO2 + NADH. Its pathway is amino-acid biosynthesis; L-leucine biosynthesis; L-leucine from 3-methyl-2-oxobutanoate: step 3/4. Its function is as follows. Catalyzes the oxidation of 3-carboxy-2-hydroxy-4-methylpentanoate (3-isopropylmalate) to 3-carboxy-4-methyl-2-oxopentanoate. The product decarboxylates to 4-methyl-2 oxopentanoate. This chain is 3-isopropylmalate dehydrogenase, found in Bacillus cereus (strain ATCC 10987 / NRS 248).